Consider the following 315-residue polypeptide: L-lactate dehydrogenase (315 aa).

The NAD(+) site is built by Val-14, Asp-35, and Tyr-66. Substrate contacts are provided by residues Gln-83, Arg-89, and 121-124 (NPVD). NAD(+)-binding positions include 119–121 (VAN) and Ser-144. Residue 149-152 (DTAR) coordinates substrate. The active-site Proton acceptor is the His-176. Position 221 is a phosphotyrosine (Tyr-221). Thr-230 lines the substrate pocket.

This sequence belongs to the LDH/MDH superfamily. LDH family. Homotetramer.

Its subcellular location is the cytoplasm. It carries out the reaction (S)-lactate + NAD(+) = pyruvate + NADH + H(+). It functions in the pathway fermentation; pyruvate fermentation to lactate; (S)-lactate from pyruvate: step 1/1. In terms of biological role, catalyzes the conversion of lactate to pyruvate. This is L-lactate dehydrogenase from Mesomycoplasma hyopneumoniae (strain 232) (Mycoplasma hyopneumoniae).